The primary structure comprises 60 residues: MAVQKSRKSRSRRDMRRSHHHMEVAELSIDATTGEKHRRHHMTKDGFYRGRQLFKASQED.

Basic residues predominate over residues 1 to 20; sequence MAVQKSRKSRSRRDMRRSHH. Positions 1-60 are disordered; that stretch reads MAVQKSRKSRSRRDMRRSHHHMEVAELSIDATTGEKHRRHHMTKDGFYRGRQLFKASQED.

The protein belongs to the bacterial ribosomal protein bL32 family.

This Psychrobacter sp. (strain PRwf-1) protein is Large ribosomal subunit protein bL32.